The chain runs to 464 residues: Argininosuccinate lyase (464 aa).

The protein belongs to the lyase 1 family. Argininosuccinate lyase subfamily.

The protein localises to the cytoplasm. It catalyses the reaction 2-(N(omega)-L-arginino)succinate = fumarate + L-arginine. It functions in the pathway amino-acid biosynthesis; L-arginine biosynthesis; L-arginine from L-ornithine and carbamoyl phosphate: step 3/3. The polypeptide is Argininosuccinate lyase (Koribacter versatilis (strain Ellin345)).